Reading from the N-terminus, the 112-residue chain is Integration host factor subunit alpha (112 aa).

Belongs to the bacterial histone-like protein family. In terms of assembly, heterodimer of an alpha and a beta chain.

In terms of biological role, this protein is one of the two subunits of integration host factor, a specific DNA-binding protein that functions in genetic recombination as well as in transcriptional and translational control. This chain is Integration host factor subunit alpha, found in Allorhizobium ampelinum (strain ATCC BAA-846 / DSM 112012 / S4) (Agrobacterium vitis (strain S4)).